The chain runs to 455 residues: UDP-N-acetylmuramoylalanine--D-glutamate ligase (455 aa).

119–125 is an ATP binding site; sequence GTNGKTT.

It belongs to the MurCDEF family.

It localises to the cytoplasm. It catalyses the reaction UDP-N-acetyl-alpha-D-muramoyl-L-alanine + D-glutamate + ATP = UDP-N-acetyl-alpha-D-muramoyl-L-alanyl-D-glutamate + ADP + phosphate + H(+). The protein operates within cell wall biogenesis; peptidoglycan biosynthesis. In terms of biological role, cell wall formation. Catalyzes the addition of glutamate to the nucleotide precursor UDP-N-acetylmuramoyl-L-alanine (UMA). In Listeria monocytogenes serovar 1/2a (strain ATCC BAA-679 / EGD-e), this protein is UDP-N-acetylmuramoylalanine--D-glutamate ligase.